The following is a 347-amino-acid chain: Nuclear distribution protein nudE-like 1 (347 aa).

Residues 28–190 (QSFQEARDEL…LAVRERQQEV (163 aa)) are a coiled coil. The self-association stretch occupies residues 56-166 (VQAEQRNRDL…LDEKESLLVS (111 aa)). The interval 64–189 (DLQADNQRLK…ELAVRERQQE (126 aa)) is interaction with KATNB1. The interval 114–133 (YVRELEQANDDLERAKRATI) is required for interaction with PAFAH1B1. The tract at residues 175–347 (RDLRQELAVR…SAPGMLPLSV (173 aa)) is interaction with CENPF. The segment at 189–256 (EVTRKSAPSS…SARISALNIV (68 aa)) is interaction with YWHAE. Positions 191–347 (TRKSAPSSPT…SAPGMLPLSV (157 aa)) are interaction with NEFL. The interaction with KATNA1 stretch occupies residues 195–256 (APSSPTLDCE…SARISALNIV (62 aa)). Phosphoserine is present on serine 215. A Phosphothreonine; by CDK1 and MAPK1 modification is found at threonine 219. Serine 231 carries the post-translational modification Phosphoserine. The interval 241-280 (TSPLTPSARISALNIVGDLLRKVGALESKLAACRNFAKDQ) is interaction with DISC1. Residue serine 242 is modified to Phosphoserine; by CDK1. At threonine 245 the chain carries Phosphothreonine; by CDK1 and MAPK1. Residues 256–291 (VGDLLRKVGALESKLAACRNFAKDQASRKSYISGNV) form a required for localization to the centrosome and interaction with dynein, dynactin, tubulin gamma, PCM1 and PCNT region. Cysteine 273 carries the S-palmitoyl cysteine; by ZDHHC2, ZDHHC3 and ZDHHC7 lipid modification. The interval 314 to 347 (KGAVNGFDPAPPPPDPGLGSSRPSSAPGMLPLSV) is disordered. Position 346 is a phosphoserine (serine 346).

It belongs to the nudE family. As to quaternary structure, self-associates. Interacts with DISC1, dynein, dynactin, tubulin gamma, KATNA1, KATNB1, microtubules, PAFAH1B1, PCM1, PCNT, and YWHAE. Interacts directly with NEFL and indirectly with NEFH. Interacts (via C-terminus) with CENPF. Interacts with ZNF365. Interacts with PLEKHM1 (via N- and C-terminus). Interacts with GTP-bound RAB9A; the interaction may lead to RAB9A-dynein motor tethering. Post-translationally, phosphorylated in mitosis. Can be phosphorylated by CDK1, CDK5 and MAPK1. Phosphorylation by CDK5 promotes interaction with KATNA1 and YWHAE. In terms of processing, palmitoylation at Cys-273 reduces affinity for dynein.

Its subcellular location is the cytoplasm. The protein resides in the cytoskeleton. It localises to the microtubule organizing center. The protein localises to the centrosome. It is found in the chromosome. Its subcellular location is the centromere. The protein resides in the kinetochore. It localises to the spindle. Functionally, required for organization of the cellular microtubule array and microtubule anchoring at the centrosome. May regulate microtubule organization at least in part by targeting the microtubule severing protein KATNA1 to the centrosome. Also positively regulates the activity of the minus-end directed microtubule motor protein dynein. May enhance dynein-mediated microtubule sliding by targeting dynein to the microtubule plus ends. Required for several dynein- and microtubule-dependent processes such as the maintenance of Golgi integrity, the centripetal motion of secretory vesicles and the coupling of the nucleus and centrosome. Also required during brain development for the migration of newly formed neurons from the ventricular/subventricular zone toward the cortical plate. Required for mitosis in some cell types but appears to be dispensible for mitosis in cortical neuronal progenitors, which instead requires NDE1. Facilitates the polymerization of neurofilaments from the individual subunits NEFH and NEFL. Positively regulates lysosome peripheral distribution and ruffled border formation in osteoclasts. Plays a role, together with DISC1, in the regulation of neurite outgrowth. May act as a RAB9A/B effector that tethers RAB9-associated late endosomes to the dynein motor for their retrograde transport to the trans-Golgi network. This chain is Nuclear distribution protein nudE-like 1 (NDEL1), found in Macaca fascicularis (Crab-eating macaque).